A 247-amino-acid chain; its full sequence is Probable dihydroorotate dehydrogenase B (NAD(+)), electron transfer subunit (247 aa).

The FAD-binding FR-type domain maps to 1–87 (MLRRVTLKET…RGPYGNGFKE (87 aa)). Cysteine 200, cysteine 205, cysteine 208, and cysteine 216 together coordinate [2Fe-2S] cluster.

It belongs to the PyrK family. In terms of assembly, heterotetramer of 2 PyrK and 2 PyrD type B subunits. Requires [2Fe-2S] cluster as cofactor. FAD serves as cofactor.

It functions in the pathway pyrimidine metabolism; UMP biosynthesis via de novo pathway; orotate from (S)-dihydroorotate (NAD(+) route): step 1/1. Functionally, responsible for channeling the electrons from the oxidation of dihydroorotate from the FMN redox center in the PyrD type B subunit to the ultimate electron acceptor NAD(+). This chain is Probable dihydroorotate dehydrogenase B (NAD(+)), electron transfer subunit, found in Pyrococcus horikoshii (strain ATCC 700860 / DSM 12428 / JCM 9974 / NBRC 100139 / OT-3).